Here is a 305-residue protein sequence, read N- to C-terminus: UDP-3-O-acyl-N-acetylglucosamine deacetylase (305 aa).

Residues His79, His238, and Asp242 each contribute to the Zn(2+) site. The active-site Proton donor is His265.

It belongs to the LpxC family. It depends on Zn(2+) as a cofactor.

It carries out the reaction a UDP-3-O-[(3R)-3-hydroxyacyl]-N-acetyl-alpha-D-glucosamine + H2O = a UDP-3-O-[(3R)-3-hydroxyacyl]-alpha-D-glucosamine + acetate. It functions in the pathway glycolipid biosynthesis; lipid IV(A) biosynthesis; lipid IV(A) from (3R)-3-hydroxytetradecanoyl-[acyl-carrier-protein] and UDP-N-acetyl-alpha-D-glucosamine: step 2/6. Catalyzes the hydrolysis of UDP-3-O-myristoyl-N-acetylglucosamine to form UDP-3-O-myristoylglucosamine and acetate, the committed step in lipid A biosynthesis. The polypeptide is UDP-3-O-acyl-N-acetylglucosamine deacetylase (Haemophilus influenzae (strain PittEE)).